Consider the following 226-residue polypeptide: Enolase-phosphatase E1 (226 aa).

This sequence belongs to the HAD-like hydrolase superfamily. MasA/MtnC family. Monomer. The cofactor is Mg(2+).

It catalyses the reaction 5-methylsulfanyl-2,3-dioxopentyl phosphate + H2O = 1,2-dihydroxy-5-(methylsulfanyl)pent-1-en-3-one + phosphate. It functions in the pathway amino-acid biosynthesis; L-methionine biosynthesis via salvage pathway; L-methionine from S-methyl-5-thio-alpha-D-ribose 1-phosphate: step 3/6. Its pathway is amino-acid biosynthesis; L-methionine biosynthesis via salvage pathway; L-methionine from S-methyl-5-thio-alpha-D-ribose 1-phosphate: step 4/6. Functionally, bifunctional enzyme that catalyzes the enolization of 2,3-diketo-5-methylthiopentyl-1-phosphate (DK-MTP-1-P) into the intermediate 2-hydroxy-3-keto-5-methylthiopentenyl-1-phosphate (HK-MTPenyl-1-P), which is then dephosphorylated to form the acireductone 1,2-dihydroxy-3-keto-5-methylthiopentene (DHK-MTPene). The polypeptide is Enolase-phosphatase E1 (Shewanella baltica (strain OS195)).